The following is a 67-amino-acid chain: Probable Sec-independent protein translocase protein TatE (67 aa).

The chain crosses the membrane as a helical span at residues 1-21; it reads MGEISITKLLVVAALVVLLFG. The segment at 45–67 is disordered; sequence DEDAGAKKDANGDLPAEKLTHKE.

It belongs to the TatA/E family. TatE subfamily.

Its subcellular location is the cell inner membrane. Its function is as follows. Part of the twin-arginine translocation (Tat) system that transports large folded proteins containing a characteristic twin-arginine motif in their signal peptide across membranes. TatE shares overlapping functions with TatA. The protein is Probable Sec-independent protein translocase protein TatE of Escherichia fergusonii (strain ATCC 35469 / DSM 13698 / CCUG 18766 / IAM 14443 / JCM 21226 / LMG 7866 / NBRC 102419 / NCTC 12128 / CDC 0568-73).